A 301-amino-acid polypeptide reads, in one-letter code: UDP-N-acetylenolpyruvoylglucosamine reductase (301 aa).

One can recognise an FAD-binding PCMH-type domain in the interval 30–194 (VGGEADYLVF…LSVKFALAPG (165 aa)). Residue arginine 173 is part of the active site. Serine 223 (proton donor) is an active-site residue. Residue glutamate 293 is part of the active site.

It belongs to the MurB family. The cofactor is FAD.

The protein resides in the cytoplasm. The catalysed reaction is UDP-N-acetyl-alpha-D-muramate + NADP(+) = UDP-N-acetyl-3-O-(1-carboxyvinyl)-alpha-D-glucosamine + NADPH + H(+). The protein operates within cell wall biogenesis; peptidoglycan biosynthesis. Cell wall formation. This chain is UDP-N-acetylenolpyruvoylglucosamine reductase, found in Streptococcus pneumoniae (strain JJA).